A 325-amino-acid polypeptide reads, in one-letter code: Methionine import ATP-binding protein MetN 3 (325 aa).

Residues 2–239 (IEVQQLCKVY…PQSALGRALL (238 aa)) enclose the ABC transporter domain. ATP is bound at residue 36 to 43 (GRSGAGKS).

The protein belongs to the ABC transporter superfamily. Methionine importer (TC 3.A.1.24) family. As to quaternary structure, the complex is composed of two ATP-binding proteins (MetN), two transmembrane proteins (MetI) and a solute-binding protein (MetQ).

The protein localises to the cell inner membrane. It carries out the reaction L-methionine(out) + ATP + H2O = L-methionine(in) + ADP + phosphate + H(+). It catalyses the reaction D-methionine(out) + ATP + H2O = D-methionine(in) + ADP + phosphate + H(+). Functionally, part of the ABC transporter complex MetNIQ involved in methionine import. Responsible for energy coupling to the transport system. The sequence is that of Methionine import ATP-binding protein MetN 3 from Pseudomonas fluorescens (strain ATCC BAA-477 / NRRL B-23932 / Pf-5).